The following is a 208-amino-acid chain: Large ribosomal subunit protein uL3 (208 aa).

An N5-methylglutamine modification is found at Q150.

This sequence belongs to the universal ribosomal protein uL3 family. Part of the 50S ribosomal subunit. Forms a cluster with proteins L14 and L19. Methylated by PrmB.

In terms of biological role, one of the primary rRNA binding proteins, it binds directly near the 3'-end of the 23S rRNA, where it nucleates assembly of the 50S subunit. In Buchnera aphidicola subsp. Cinara cedri (strain Cc), this protein is Large ribosomal subunit protein uL3.